Reading from the N-terminus, the 149-residue chain is uncharacterized protein (149 aa).

This is an uncharacterized protein from Acidithiobacillus ferridurans.